Reading from the N-terminus, the 222-residue chain is Probable nicotinate-nucleotide adenylyltransferase (222 aa).

Belongs to the NadD family.

It carries out the reaction nicotinate beta-D-ribonucleotide + ATP + H(+) = deamido-NAD(+) + diphosphate. It functions in the pathway cofactor biosynthesis; NAD(+) biosynthesis; deamido-NAD(+) from nicotinate D-ribonucleotide: step 1/1. In terms of biological role, catalyzes the reversible adenylation of nicotinate mononucleotide (NaMN) to nicotinic acid adenine dinucleotide (NaAD). The sequence is that of Probable nicotinate-nucleotide adenylyltransferase from Xylella fastidiosa (strain M12).